Reading from the N-terminus, the 298-residue chain is Zinc finger protein-like 1 homolog (298 aa).

Residues 1–43 form a B box-type; degenerate zinc finger; the sequence is MGLCKCPKRLVTNQFCFEHRVNVCEHCMVQSHPKCIVQSYLQW. Residues 53-101 form an RING-type; atypical zinc finger; the sequence is CTLCGTTLEQGDCVRLVCYHVFHWDCLNARQAALPANTAPRGHQCPACT. Positions 199 to 230 are disordered; it reads AGDYASSRRPLLPRQSPIGGTDRDDNKYQRRT. Phosphoserine is present on Ser-214. Residues 255–275 traverse the membrane as a helical segment; that stretch reads WFLVTAGILAFVLFVYLMAWL.

Belongs to the ZFPL1 family.

The protein resides in the membrane. The chain is Zinc finger protein-like 1 homolog from Drosophila erecta (Fruit fly).